Reading from the N-terminus, the 1368-residue chain is Inactive tyrosine-protein kinase PRAG1 (1368 aa).

The segment at 200–236 (CLKGPRPCTSPQPLRESLPSEDDSDQRCSPSGDSEGG) is disordered. At Tyr238 the chain carries Phosphotyrosine; by CSK. The segment at 297–330 (STANPPHLGPKKPSLNSEAASSSDGLSCGSSRSG) is disordered. Low complexity predominate over residues 317-330 (SSSDGLSCGSSRSG). Tyr343 and Tyr391 each carry phosphotyrosine; by CSK. 3 disordered regions span residues 392-443 (AESA…PNAA), 499-605 (LSSR…GAWS), and 636-792 (HSNS…KKIV). The span at 414–434 (VSSGQVWTGDTWSQKTPSGWS) shows a compositional bias: polar residues. Over residues 502 to 518 (RESHPHNMTENSSKEKP) the composition is skewed to basic and acidic residues. Composition is skewed to low complexity over residues 522 to 535 (PKLS…SPVS) and 550 to 563 (SGSS…SRVP). Polar residues-rich tracts occupy residues 564–574 (TNLTSSCQTNG) and 652–666 (SGQN…SKSA). A phosphoserine mark is found at Ser667 and Ser716. Composition is skewed to polar residues over residues 707-717 (VSQSSAESLSP) and 725-741 (SFTT…SRTC). Residues Ser753 and Ser797 each carry the phosphoserine modification. Disordered stretches follow at residues 799 to 818 (PDGF…SPKL) and 873 to 901 (NSKG…VSSQ). Positions 887-901 (AATSTSSSQLSVSSQ) are enriched in low complexity. The tract at residues 906–949 (SSQLQLHSLLSSISSKEGTYAKLGGLYTQSLARLVTKCEDLFMG) is required for homodimerization. Positions 940-1291 (VTKCEDLFMG…EAKRVLQCLL (352 aa)) constitute a Protein kinase domain. Positions 1134–1144 (SSPGPSANPSV) are enriched in polar residues. The disordered stretch occupies residues 1134-1166 (SSPGPSANPSVPTTTSRCPSAAPAATTACQGGP). Residues 1145–1162 (PTTTSRCPSAAPAATTAC) show a composition bias toward low complexity. Residues 1293–1368 (GPRRELVEQP…LQSLKLLQLL (76 aa)) form a required for homodimerization region.

Belongs to the protein kinase superfamily. In terms of assembly, homodimer. Dimerization leads to the catalytic activation of CSK. Interacts (via C-terminus) with RND2. Interacts with CSK (via SH2 domain) in a Tyr-391 phosphorylation-dependent manner; this interaction potentiates kinase activity of CSK. Interacts with NOTCH1 intracellular domain (N1ICD). Forms a complex with N1ICD and MAML1, in a MAML1-dependent manner. Post-translationally, phosphorylated by CSK on Tyr-238, Tyr-343, and Tyr-391; Tyr-391 is a primary site of phosphorylation. Highly-expressed in brain, including cortical and hippocampal pyramidal neurons, as well as in kidney, spleen, colon and small intestine.

It localises to the cytoplasm. Its subcellular location is the nucleus. It is found in the cell junction. The protein resides in the focal adhesion. In terms of biological role, catalytically inactive protein kinase that acts as a scaffold protein. Functions as an effector of the small GTPase RND2, which stimulates RhoA activity and inhibits NGF-induced neurite outgrowth. Promotes Src family kinase (SFK) signallig by regulating the subcellular localization of CSK, a negative regulator of these kinases, leading to the regulation of cell morphology and motility by a CSK-dependent mechanism. Acts as a critical coactivator of Notch signaling. The polypeptide is Inactive tyrosine-protein kinase PRAG1 (Rattus norvegicus (Rat)).